The primary structure comprises 334 residues: tRNA-dihydrouridine synthase B (334 aa).

Residues 16–18 (PMA) and Gln-70 each bind FMN. Cys-100 functions as the Proton donor in the catalytic mechanism. Residues Lys-139, 200-202 (NGD), and 224-225 (GR) each bind FMN.

Belongs to the Dus family. DusB subfamily. FMN serves as cofactor.

The enzyme catalyses a 5,6-dihydrouridine in tRNA + NAD(+) = a uridine in tRNA + NADH + H(+). The catalysed reaction is a 5,6-dihydrouridine in tRNA + NADP(+) = a uridine in tRNA + NADPH + H(+). In terms of biological role, catalyzes the synthesis of 5,6-dihydrouridine (D), a modified base found in the D-loop of most tRNAs, via the reduction of the C5-C6 double bond in target uridines. This chain is tRNA-dihydrouridine synthase B, found in Serratia marcescens.